Reading from the N-terminus, the 194-residue chain is NADPH-flavin oxidoreductase (194 aa).

This sequence belongs to the non-flavoprotein flavin reductase family. In terms of assembly, homodimer. It can form an isobutylamine N-hydroxylase two component enzyme system formed of a flavin reductase component (VlmR) and a monooxygenase component (VlmH).

The catalysed reaction is FADH2 + NADP(+) = FAD + NADPH + 2 H(+). It catalyses the reaction FMNH2 + NADP(+) = FMN + NADPH + 2 H(+). Functionally, involved in the biosynthesis of the azoxy antibiotic valanimycin, which has an antitumor activity. Catalyzes the reduction of FAD/FMN to FADH(2)/FMNH(2) which are subsequently used for the hydroxylation of isobutylamine by the isobutylamine N-hydroxylase VlmH. It can reduce either FAD or flavin mononucleotide (FMN) but prefers FAD. The enzyme has a strong preference for NADPH as acceptor. The chain is NADPH-flavin oxidoreductase from Streptomyces viridifaciens.